We begin with the raw amino-acid sequence, 115 residues long: Large ribosomal subunit protein uL18 (115 aa).

The protein belongs to the universal ribosomal protein uL18 family. In terms of assembly, part of the 50S ribosomal subunit; part of the 5S rRNA/L5/L18/L25 subcomplex. Contacts the 5S and 23S rRNAs.

This is one of the proteins that bind and probably mediate the attachment of the 5S RNA into the large ribosomal subunit, where it forms part of the central protuberance. This chain is Large ribosomal subunit protein uL18, found in Rickettsia rickettsii (strain Iowa).